The sequence spans 859 residues: Leucine--tRNA ligase (859 aa).

Residues 42-52 carry the 'HIGH' region motif; that stretch reads PYPSGRLHMGH. The 'KMSKS' region motif lies at 618-622; it reads KMSKS. Lys-621 is a binding site for ATP.

It belongs to the class-I aminoacyl-tRNA synthetase family.

The protein localises to the cytoplasm. The catalysed reaction is tRNA(Leu) + L-leucine + ATP = L-leucyl-tRNA(Leu) + AMP + diphosphate. The protein is Leucine--tRNA ligase of Shewanella sp. (strain W3-18-1).